We begin with the raw amino-acid sequence, 701 residues long: 2-isopropylmalate synthase (701 aa).

The segment at 1-40 (MTTSESPDAYTESFGAHTIVKPAGPPRVGQPSWNPQRASS) is disordered. The segment covering 31-40 (PSWNPQRASS) has biased composition (polar residues). Residues 72–346 (PLWCAVDLRD…DPQIDFSNID (275 aa)) enclose the Pyruvate carboxyltransferase domain. Positions 81, 285, 287, and 321 each coordinate Mg(2+). Positions 491–701 (PVRPLERIRQ…VVSAVNRAAR (211 aa)) are regulatory domain. Residues 575-593 (VTIASPAQPGEAGRHASDP) form a VNTR1 repeat. Residues 581–670 (AQPGEAGRHA…EAGRHASDPV (90 aa)) form a disordered region. The stretch at 594–612 (VTIASPAQPGEAGRHASDP) is one VNTR2 repeat. One copy of the VNTR3 repeat lies at 613–631 (VTIASPAQPGEAGRHASDP). The VNTR4 repeat unit spans residues 632–650 (VTIASPAQPGEAGRHASDP). The VNTR5 repeat unit spans residues 651 to 669 (VTIASPAQPGEAGRHASDP).

It belongs to the alpha-IPM synthase/homocitrate synthase family. LeuA type 2 subfamily. As to quaternary structure, homodimer. Requires Mg(2+) as cofactor.

The protein localises to the cytoplasm. The catalysed reaction is 3-methyl-2-oxobutanoate + acetyl-CoA + H2O = (2S)-2-isopropylmalate + CoA + H(+). The protein operates within amino-acid biosynthesis; L-leucine biosynthesis; L-leucine from 3-methyl-2-oxobutanoate: step 1/4. In terms of biological role, catalyzes the condensation of the acetyl group of acetyl-CoA with 3-methyl-2-oxobutanoate (2-ketoisovalerate) to form 3-carboxy-3-hydroxy-4-methylpentanoate (2-isopropylmalate). The chain is 2-isopropylmalate synthase from Mycobacterium bovis (strain ATCC BAA-935 / AF2122/97).